The chain runs to 254 residues: 3-deoxy-manno-octulosonate cytidylyltransferase (254 aa).

The protein belongs to the KdsB family.

It localises to the cytoplasm. The catalysed reaction is 3-deoxy-alpha-D-manno-oct-2-ulosonate + CTP = CMP-3-deoxy-beta-D-manno-octulosonate + diphosphate. Its pathway is nucleotide-sugar biosynthesis; CMP-3-deoxy-D-manno-octulosonate biosynthesis; CMP-3-deoxy-D-manno-octulosonate from 3-deoxy-D-manno-octulosonate and CTP: step 1/1. Functionally, activates KDO (a required 8-carbon sugar) for incorporation into bacterial lipopolysaccharide in Gram-negative bacteria. This Lawsonia intracellularis (strain PHE/MN1-00) protein is 3-deoxy-manno-octulosonate cytidylyltransferase.